The sequence spans 423 residues: MGILLIGMSHKTSPLAVRERFSLSCENRDHPLDRIRQMPSIREALYLATCNRVEVLVSAAEEAEQAVEEGLKALMAERGGISGQELERCLYTLSGAEAVRHLFRVASSLDSLVMGEPQILGQVKEAYREAVEHGVTGILLNRILHHAFQVAKRVRTETGIADNAVSVGYAAVELAKKIFGRLDGKVILLVGAGEMSELAARHLLKQGIKSIFVANRTHARALEMAEQFEGKAVVLEQVPEVLKSVDIVISSTGASNYVLTRDMVAAALRRRKNRFLFLIDIAVPRDIEPAAGDIDNVYLYNIDHLQELVDENRNHRLREAEKAEAIIEEEVGNHTAWLSTLDVVPTIVEFREKIEGIMKAELGKSASWRHSLSEIDQRHVESLMASIVNKILHEPTACLREQSRNRNGKAYAAALRKLFKLER.

Residues 49-52 (TCNR), serine 111, 116-118 (EPQ), and glutamine 122 each bind substrate. Cysteine 50 functions as the Nucleophile in the catalytic mechanism. Residue 191–196 (GAGEMS) coordinates NADP(+).

The protein belongs to the glutamyl-tRNA reductase family. As to quaternary structure, homodimer.

It carries out the reaction (S)-4-amino-5-oxopentanoate + tRNA(Glu) + NADP(+) = L-glutamyl-tRNA(Glu) + NADPH + H(+). Its pathway is porphyrin-containing compound metabolism; protoporphyrin-IX biosynthesis; 5-aminolevulinate from L-glutamyl-tRNA(Glu): step 1/2. Its function is as follows. Catalyzes the NADPH-dependent reduction of glutamyl-tRNA(Glu) to glutamate 1-semialdehyde (GSA). The protein is Glutamyl-tRNA reductase of Syntrophus aciditrophicus (strain SB).